Here is a 66-residue protein sequence, read N- to C-terminus: Large ribosomal subunit protein bL35 (66 aa).

Residues 1–16 show a composition bias toward basic residues; the sequence is MPKQKTHRASAKRFKR. Residues 1 to 22 form a disordered region; that stretch reads MPKQKTHRASAKRFKRTGSGGL.

Belongs to the bacterial ribosomal protein bL35 family.

The sequence is that of Large ribosomal subunit protein bL35 from Streptococcus suis (strain 05ZYH33).